We begin with the raw amino-acid sequence, 319 residues long: Cytochrome c biogenesis protein CcsA (319 aa).

Transmembrane regions (helical) follow at residues 14–34 (AFAV…FPQW), 46–66 (AIAN…GGYF), 74–94 (SLFF…SISG), 97–117 (LVGV…ALSL), and 142–162 (VMML…ALLV). Positions 175–201 (SVGTGSFRSRRPEPSLEASTGNGGTTV) are disordered. A compositionally biased stretch (polar residues) spans 191–201 (EASTGNGGTTV). Transmembrane regions (helical) follow at residues 227 to 247 (MIGL…VWAN), 254 to 274 (WSWD…AAYL), and 288 to 308 (AILA…VNLL).

Belongs to the CcmF/CycK/Ccl1/NrfE/CcsA family. In terms of assembly, may interact with ccs1.

The protein localises to the cellular thylakoid membrane. Required during biogenesis of c-type cytochromes (cytochrome c6 and cytochrome f) at the step of heme attachment. This is Cytochrome c biogenesis protein CcsA from Thermosynechococcus vestitus (strain NIES-2133 / IAM M-273 / BP-1).